The following is a 348-amino-acid chain: Phosphate acyltransferase (348 aa).

The protein belongs to the PlsX family. In terms of assembly, homodimer. Probably interacts with PlsY.

Its subcellular location is the cytoplasm. It catalyses the reaction a fatty acyl-[ACP] + phosphate = an acyl phosphate + holo-[ACP]. It functions in the pathway lipid metabolism; phospholipid metabolism. Functionally, catalyzes the reversible formation of acyl-phosphate (acyl-PO(4)) from acyl-[acyl-carrier-protein] (acyl-ACP). This enzyme utilizes acyl-ACP as fatty acyl donor, but not acyl-CoA. The chain is Phosphate acyltransferase from Pectobacterium carotovorum subsp. carotovorum (strain PC1).